The following is a 197-amino-acid chain: Protein GrpE (197 aa).

The tract at residues 1–39 is disordered; it reads MSSKEQKTPEGQAPEEIIMDQHEEIEAVEPEASAEQVDP.

This sequence belongs to the GrpE family. Homodimer.

The protein localises to the cytoplasm. In terms of biological role, participates actively in the response to hyperosmotic and heat shock by preventing the aggregation of stress-denatured proteins, in association with DnaK and GrpE. It is the nucleotide exchange factor for DnaK and may function as a thermosensor. Unfolded proteins bind initially to DnaJ; upon interaction with the DnaJ-bound protein, DnaK hydrolyzes its bound ATP, resulting in the formation of a stable complex. GrpE releases ADP from DnaK; ATP binding to DnaK triggers the release of the substrate protein, thus completing the reaction cycle. Several rounds of ATP-dependent interactions between DnaJ, DnaK and GrpE are required for fully efficient folding. This Escherichia coli O127:H6 (strain E2348/69 / EPEC) protein is Protein GrpE.